The primary structure comprises 211 residues: Arginine exporter protein ArgO (211 aa).

6 helical membrane passes run 1–21 (MISY…PLGP), 37–57 (LMIA…GIFG), 68–88 (LLAL…FGAL), 111–131 (IIAT…DTFV), 147–167 (WFAL…ALLA), and 179–199 (AQRI…FQLA).

Belongs to the LysE/ArgO transporter (TC 2.A.75) family.

It localises to the cell inner membrane. The enzyme catalyses L-arginine(in) = L-arginine(out). Involved in the export of arginine. Important to control the intracellular level of arginine and the correct balance between arginine and lysine. The polypeptide is Arginine exporter protein ArgO (Salmonella schwarzengrund (strain CVM19633)).